The sequence spans 485 residues: Bindin (485 aa).

Residues 1 to 20 form the signal peptide; that stretch reads MGFHQISVIIVVLALASARA. Residues 21–247 constitute a propeptide that is removed on maturation; sequence ADEFPSHTDT…DSERGARKKR (227 aa). 3 disordered regions span residues 157-195, 219-273, and 305-331; these read GETRKRRGADDNDGDDVSKRASPRKGDEPAGHKLKDLAP, ISGH…PAQQ, and GGGQFGAFSPGEAEADNADYDEYSDSL. Residues 172 to 192 are compositionally biased toward basic and acidic residues; sequence DVSKRASPRKGDEPAGHKLKD. Residues 250 to 264 show a composition bias toward polar residues; that stretch reads NQGNYPQAMNPQSRG. Residues 317 to 331 are compositionally biased toward acidic residues; it reads AEADNADYDEYSDSL. Residues 371 to 379 are fucose-binding domain; sequence LRHLRHHSN. The tract at residues 459–485 is disordered; that stretch reads QQGMGGVPQRMGGQPQGNAYNQGYRQG. Low complexity predominate over residues 465-475; the sequence is VPQRMGGQPQG. A compositionally biased stretch (polar residues) spans 476–485; sequence NAYNQGYRQG.

Belongs to the bindin family.

It is found in the cytoplasmic vesicle. The protein resides in the secretory vesicle. The protein localises to the acrosome lumen. In terms of biological role, species-specific sea urchin sperm protein required for adhesion of sperm to the egg surface during fertilization. Bindin coats the acrosomal process after it is externalized by the acrosome reaction. It binds to sulfated, fucose-containing polysaccharides on the vitelline layer receptor proteoglycans which cover the egg plasma membrane. This Mesocentrotus franciscanus (Giant red sea urchin) protein is Bindin.